The following is a 141-amino-acid chain: Hemoglobin subunit alpha (141 aa).

The 141-residue stretch at 1 to 141 folds into the Globin domain; it reads VLSAADKSNV…VSTVLTSKYR (141 aa). At Ser-3 the chain carries Phosphoserine. Lys-7 and Lys-11 each carry N6-succinyllysine. Lys-16 is subject to N6-acetyllysine; alternate. Position 16 is an N6-succinyllysine; alternate (Lys-16). Tyr-24 is subject to Phosphotyrosine. Residue Ser-35 is modified to Phosphoserine. Lys-40 carries the N6-succinyllysine modification. At Ser-49 the chain carries Phosphoserine. Position 58 (His-58) interacts with O2. Heme b is bound at residue His-87. At Ser-102 the chain carries Phosphoserine. The residue at position 108 (Thr-108) is a Phosphothreonine. Ser-124 is subject to Phosphoserine. Phosphothreonine is present on residues Thr-134 and Thr-137. The residue at position 138 (Ser-138) is a Phosphoserine.

Belongs to the globin family. As to quaternary structure, heterotetramer of two alpha chains and two beta chains. In terms of tissue distribution, red blood cells.

Its function is as follows. Involved in oxygen transport from the lung to the various peripheral tissues. Functionally, hemopressin acts as an antagonist peptide of the cannabinoid receptor CNR1. Hemopressin-binding efficiently blocks cannabinoid receptor CNR1 and subsequent signaling. This chain is Hemoglobin subunit alpha (HBA), found in Felis catus (Cat).